Reading from the N-terminus, the 523-residue chain is DNA-directed RNA polymerase subunit Rpo2N (523 aa).

The disordered stretch occupies residues 501 to 523 (SSMGVEGIPGISMETTSTTSADD). Positions 513–523 (METTSTTSADD) are enriched in polar residues.

Belongs to the RNA polymerase beta chain family. As to quaternary structure, part of the RNA polymerase complex.

Its subcellular location is the cytoplasm. The enzyme catalyses RNA(n) + a ribonucleoside 5'-triphosphate = RNA(n+1) + diphosphate. Its function is as follows. DNA-dependent RNA polymerase (RNAP) catalyzes the transcription of DNA into RNA using the four ribonucleoside triphosphates as substrates. The Rpo2 subunit (Rpo2N and Rpo2C in this organism) is implicated in DNA promoter recognition and in nucleotide binding. The protein is DNA-directed RNA polymerase subunit Rpo2N of Halobacterium salinarum (strain ATCC 29341 / DSM 671 / R1).